The following is a 357-amino-acid chain: IGF-like family receptor 1 (357 aa).

The N-terminal stretch at methionine 1–alanine 22 is a signal peptide. Residues serine 23–serine 160 lie on the Extracellular side of the membrane. Residues isoleucine 100–tryptophan 147 form a disordered region. The span at serine 129–serine 139 shows a compositional bias: low complexity. Residues leucine 161–alanine 181 traverse the membrane as a helical segment. The Cytoplasmic portion of the chain corresponds to leucine 182 to alanine 357.

It is found in the cell membrane. Probable cell membrane receptor for the IGF-like family protein IGFL. The chain is IGF-like family receptor 1 (IGFLR1) from Bos taurus (Bovine).